Here is a 379-residue protein sequence, read N- to C-terminus: UDP-4-amino-4-deoxy-L-arabinose--oxoglutarate aminotransferase (379 aa).

N6-(pyridoxal phosphate)lysine is present on Lys182.

It belongs to the DegT/DnrJ/EryC1 family. ArnB subfamily. In terms of assembly, homodimer. It depends on pyridoxal 5'-phosphate as a cofactor.

The enzyme catalyses UDP-4-amino-4-deoxy-beta-L-arabinose + 2-oxoglutarate = UDP-beta-L-threo-pentopyranos-4-ulose + L-glutamate. Its pathway is nucleotide-sugar biosynthesis; UDP-4-deoxy-4-formamido-beta-L-arabinose biosynthesis; UDP-4-deoxy-4-formamido-beta-L-arabinose from UDP-alpha-D-glucuronate: step 2/3. It functions in the pathway bacterial outer membrane biogenesis; lipopolysaccharide biosynthesis. Its function is as follows. Catalyzes the conversion of UDP-4-keto-arabinose (UDP-Ara4O) to UDP-4-amino-4-deoxy-L-arabinose (UDP-L-Ara4N). The modified arabinose is attached to lipid A and is required for resistance to polymyxin and cationic antimicrobial peptides. In Escherichia coli (strain ATCC 8739 / DSM 1576 / NBRC 3972 / NCIMB 8545 / WDCM 00012 / Crooks), this protein is UDP-4-amino-4-deoxy-L-arabinose--oxoglutarate aminotransferase.